The following is a 163-amino-acid chain: Small ribosomal subunit protein uS5 (163 aa).

An S5 DRBM domain is found at 8-71 (LIEKIVDLNR…ERAKKGMVQV (64 aa)).

This sequence belongs to the universal ribosomal protein uS5 family. As to quaternary structure, part of the 30S ribosomal subunit. Contacts proteins S4 and S8.

In terms of biological role, with S4 and S12 plays an important role in translational accuracy. Located at the back of the 30S subunit body where it stabilizes the conformation of the head with respect to the body. The protein is Small ribosomal subunit protein uS5 of Oleidesulfovibrio alaskensis (strain ATCC BAA-1058 / DSM 17464 / G20) (Desulfovibrio alaskensis).